The sequence spans 150 residues: Small ribosomal subunit protein uS11 (150 aa).

Belongs to the universal ribosomal protein uS11 family. In terms of assembly, part of the 30S ribosomal subunit. Interacts with proteins S7 and S18. Binds to IF-3.

In terms of biological role, located on the platform of the 30S subunit, it bridges several disparate RNA helices of the 16S rRNA. Forms part of the Shine-Dalgarno cleft in the 70S ribosome. This Pelagibacter ubique (strain HTCC1062) protein is Small ribosomal subunit protein uS11.